A 181-amino-acid polypeptide reads, in one-letter code: ADP-ribosylation factor 2 (181 aa).

G2 carries N-myristoyl glycine lipidation. Residues 24–31, 67–71, and 126–129 each bind GTP; these read GLDAAGKT, DVGGQ, and NKQD.

Belongs to the small GTPase superfamily. Arf family.

The protein resides in the golgi apparatus. GTP-binding protein that functions as an allosteric activator of the cholera toxin catalytic subunit, an ADP-ribosyltransferase. Involved in protein trafficking; may modulate vesicle budding and uncoating within the Golgi apparatus. This Bos taurus (Bovine) protein is ADP-ribosylation factor 2 (ARF2).